A 360-amino-acid polypeptide reads, in one-letter code: Endolytic peptidoglycan transglycosylase RlpA (360 aa).

A signal peptide spans 1-17 (MRKEWLWVGIASVLLSA). Cysteine 18 carries N-palmitoyl cysteine lipidation. Cysteine 18 carries the S-diacylglycerol cysteine lipid modification. Residues 283-359 (SAISGGYVVQ…AQQQSFIVAA (77 aa)) form the SPOR domain.

This sequence belongs to the RlpA family.

It is found in the cell membrane. Its function is as follows. Lytic transglycosylase with a strong preference for naked glycan strands that lack stem peptides. The sequence is that of Endolytic peptidoglycan transglycosylase RlpA from Yersinia pestis.